Here is a 254-residue protein sequence, read N- to C-terminus: HLA class II histocompatibility antigen, DR alpha chain (254 aa).

Positions M1 to A25 are cleaved as a signal peptide. Residues I26–N109 form an alpha-1 region. Over I26–E216 the chain is Extracellular. 2 N-linked (GlcNAc...) asparagine glycosylation sites follow: N103 and N143. Positions V110–W203 are alpha-2. Residues P112–E204 enclose the Ig-like C1-type domain. An intrachain disulfide couples C132 to C188. Positions E204–E216 are connecting peptide. Residues N217–I239 form a helical membrane-spanning segment. Residues K240 to L254 are Cytoplasmic-facing. K244 participates in a covalent cross-link: Glycyl lysine isopeptide (Lys-Gly) (interchain with G-Cter in ubiquitin).

This sequence belongs to the MHC class II family. As to quaternary structure, heterotrimer that consists of an alpha chain HLA-DRA, a beta chain HLA-DRB and a peptide (peptide-MHCII). Newly synthesized alpha and beta chains forms a heterodimer (MHCII) that associates with the CD74/invariant chain (Ii) in the endoplasmic reticulum (ER). Ii is a trimer composed of three subunits and each subunit interacts with one MHCII dimer, blocking the peptide-binding cleft. As a result, MHCII molecules cannot bind peptides present in the ER. The complex of MHCII and CD74/Ii is transported in vesicles from ER to Golgi to lysosomes, where it encounters antigenic peptides generated via proteolysis of endocytosed antigens. MHCII dimers are dissociated from CD74/Ii by the combined action of proteolysis and HLA-DM. Lysosomal enzymes such as cathepsin, degrade CD74/Ii leaving a 24 amino acid remnant called class II-associated Ii or CLIP. Interacts (via the peptide binding cleft) with CLIP; this interaction inhibits antigen peptide binding before entry in the endosomal compartment. The displacement of CLIP and replacement by a high affinity peptide in lysosomes is performed by HLA-DM heterodimer. HLA-DM catalyzes CLIP dissociation from MHCII, stabilizes empty MHCII and mediates the selection of high affinity peptides. Interacts with HLA-DM heterodimer; this interaction is direct. Interacts (via alpha-1 domain) with TCR (via CDRs). Interacts (via alpha-2 domain) with CD4 (via Ig-like V-type domain); this interaction increases the affinity of TCR for peptide-MHCII. In terms of assembly, (Microbial infection) Interacts with Epstein-Barr virus BZLF2/gp42. (Microbial infection) Interacts with Staphylococcus aureus enterotoxin A/entA, enterotoxin B/entB, enterotoxin C1/entC1, enterotoxin D/entD, and enterotoxin H/entH. In terms of processing, ubiquitinated by MARCHF1 or MARCHF8 at Lys-244 leading to down-regulation of MHCII. When associated with ubiquitination of the beta chain at 'Lys-254', the down-regulation of MHCII may be highly effective. In terms of tissue distribution, expressed in professional APCs: macrophages, dendritic cells and B cells (at protein level). Expressed in thymic epithelial cells (at protein level).

Its subcellular location is the cell membrane. The protein localises to the endoplasmic reticulum membrane. The protein resides in the early endosome membrane. It is found in the late endosome membrane. It localises to the lysosome membrane. Its subcellular location is the autolysosome membrane. Its function is as follows. An alpha chain of antigen-presenting major histocompatibility complex class II (MHCII) molecule. In complex with the beta chain HLA-DRB, displays antigenic peptides on professional antigen presenting cells (APCs) for recognition by alpha-beta T cell receptor (TCR) on HLA-DR-restricted CD4-positive T cells. This guides antigen-specific T-helper effector functions, both antibody-mediated immune response and macrophage activation, to ultimately eliminate the infectious agents and transformed cells. Typically presents extracellular peptide antigens of 10 to 30 amino acids that arise from proteolysis of endocytosed antigens in lysosomes. In the tumor microenvironment, presents antigenic peptides that are primarily generated in tumor-resident APCs likely via phagocytosis of apoptotic tumor cells or macropinocytosis of secreted tumor proteins. Presents peptides derived from intracellular proteins that are trapped in autolysosomes after macroautophagy, a mechanism especially relevant for T cell selection in the thymus and central immune tolerance. The selection of the immunodominant epitopes follows two processing modes: 'bind first, cut/trim later' for pathogen-derived antigenic peptides and 'cut first, bind later' for autoantigens/self-peptides. The anchor residue at position 1 of the peptide N-terminus, usually a large hydrophobic residue, is essential for high affinity interaction with MHCII molecules. This Homo sapiens (Human) protein is HLA class II histocompatibility antigen, DR alpha chain (HLA-DRA).